The primary structure comprises 341 residues: Anthranilate phosphoribosyltransferase (341 aa).

5-phospho-alpha-D-ribose 1-diphosphate-binding positions include G82, 85–86 (GD), T90, 92–95 (NIST), 110–118 (KHGNRAITS), and T122. G82 lines the anthranilate pocket. Residue S94 coordinates Mg(2+). An anthranilate-binding site is contributed by N113. R168 is an anthranilate binding site. D226 and E227 together coordinate Mg(2+).

This sequence belongs to the anthranilate phosphoribosyltransferase family. Homodimer. Mg(2+) serves as cofactor.

The enzyme catalyses N-(5-phospho-beta-D-ribosyl)anthranilate + diphosphate = 5-phospho-alpha-D-ribose 1-diphosphate + anthranilate. It functions in the pathway amino-acid biosynthesis; L-tryptophan biosynthesis; L-tryptophan from chorismate: step 2/5. Catalyzes the transfer of the phosphoribosyl group of 5-phosphorylribose-1-pyrophosphate (PRPP) to anthranilate to yield N-(5'-phosphoribosyl)-anthranilate (PRA). This chain is Anthranilate phosphoribosyltransferase, found in Caulobacter vibrioides (strain ATCC 19089 / CIP 103742 / CB 15) (Caulobacter crescentus).